Consider the following 162-residue polypeptide: Phosphopantetheine adenylyltransferase (162 aa).

T10 provides a ligand contact to substrate. ATP contacts are provided by residues 10-11 and H18; that span reads TF. Residues K42, L74, and R88 each contribute to the substrate site. ATP contacts are provided by residues 89–91, E99, and 124–130; these read GLR and FSCISST.

This sequence belongs to the bacterial CoaD family. Homohexamer. The cofactor is Mg(2+).

It localises to the cytoplasm. The catalysed reaction is (R)-4'-phosphopantetheine + ATP + H(+) = 3'-dephospho-CoA + diphosphate. Its pathway is cofactor biosynthesis; coenzyme A biosynthesis; CoA from (R)-pantothenate: step 4/5. In terms of biological role, reversibly transfers an adenylyl group from ATP to 4'-phosphopantetheine, yielding dephospho-CoA (dPCoA) and pyrophosphate. This is Phosphopantetheine adenylyltransferase from Francisella philomiragia subsp. philomiragia (strain ATCC 25017 / CCUG 19701 / FSC 153 / O#319-036).